The chain runs to 544 residues: Chaperonin GroEL (544 aa).

ATP contacts are provided by residues 29-32 (TIGP), 86-90 (DGTTT), G413, 478-480 (NAA), and D494.

This sequence belongs to the chaperonin (HSP60) family. As to quaternary structure, forms a cylinder of 14 subunits composed of two heptameric rings stacked back-to-back. Interacts with the co-chaperonin GroES.

Its subcellular location is the cytoplasm. The enzyme catalyses ATP + H2O + a folded polypeptide = ADP + phosphate + an unfolded polypeptide.. Its function is as follows. Together with its co-chaperonin GroES, plays an essential role in assisting protein folding. The GroEL-GroES system forms a nano-cage that allows encapsulation of the non-native substrate proteins and provides a physical environment optimized to promote and accelerate protein folding. The sequence is that of Chaperonin GroEL from Exiguobacterium sp. (strain ATCC BAA-1283 / AT1b).